Here is a 566-residue protein sequence, read N- to C-terminus: Mitochondrial distribution and morphology protein 34 (566 aa).

Residues 1-195 enclose the SMP-LTD domain; it reads MAFNFNWSPL…LPAIIHRLSL (195 aa). 4 disordered regions span residues 212 to 237, 349 to 401, 432 to 518, and 539 to 566; these read PEQT…DSLG, GYGL…NPSV, PERR…SSST, and KLMP…AYGQ. Basic residues predominate over residues 358-370; the sequence is RHSKAHSRKRKKR. Residues 380-401 show a composition bias toward polar residues; that stretch reads TSDTASVSDESAYTETASNPSV. Positions 444-454 are enriched in basic and acidic residues; it reads PRRDIATEMLR.

This sequence belongs to the MDM34 family. As to quaternary structure, component of the ER-mitochondria encounter structure (ERMES) or MDM complex, composed of mmm1, mdm10, mdm12 and mdm34.

Its subcellular location is the mitochondrion outer membrane. Component of the ERMES/MDM complex, which serves as a molecular tether to connect the endoplasmic reticulum (ER) and mitochondria. Components of this complex are involved in the control of mitochondrial shape and protein biogenesis, and function in nonvesicular lipid trafficking between the ER and mitochondria. Mdm34 is required for the interaction of the ER-resident membrane protein mmm1 and the outer mitochondrial membrane-resident beta-barrel protein mdm10. The protein is Mitochondrial distribution and morphology protein 34 of Aspergillus flavus (strain ATCC 200026 / FGSC A1120 / IAM 13836 / NRRL 3357 / JCM 12722 / SRRC 167).